Here is a 325-residue protein sequence, read N- to C-terminus: DNA-directed RNA polymerase subunit alpha (325 aa).

The alpha N-terminal domain (alpha-NTD) stretch occupies residues 1 to 231; the sequence is MQTSLLKPKI…DQLSVFAALE (231 aa). The interval 246 to 325 is alpha C-terminal domain (alpha-CTD); that stretch reads IDPILLRPVD…ENWPPAGLDK (80 aa).

It belongs to the RNA polymerase alpha chain family. In terms of assembly, homodimer. The RNAP catalytic core consists of 2 alpha, 1 beta, 1 beta' and 1 omega subunit. When a sigma factor is associated with the core the holoenzyme is formed, which can initiate transcription.

The catalysed reaction is RNA(n) + a ribonucleoside 5'-triphosphate = RNA(n+1) + diphosphate. DNA-dependent RNA polymerase catalyzes the transcription of DNA into RNA using the four ribonucleoside triphosphates as substrates. The sequence is that of DNA-directed RNA polymerase subunit alpha from Burkholderia thailandensis (strain ATCC 700388 / DSM 13276 / CCUG 48851 / CIP 106301 / E264).